The chain runs to 173 residues: Bifunctional protein PyrR (173 aa).

Positions 93–105 match the PRPP-binding motif; that stretch reads IILIDDVLYTGRT.

Belongs to the purine/pyrimidine phosphoribosyltransferase family. PyrR subfamily. Homodimer and homohexamer; in equilibrium.

The catalysed reaction is UMP + diphosphate = 5-phospho-alpha-D-ribose 1-diphosphate + uracil. In terms of biological role, regulates transcriptional attenuation of the pyrimidine nucleotide (pyr) operon by binding in a uridine-dependent manner to specific sites on pyr mRNA. This disrupts an antiterminator hairpin in the RNA and favors formation of a downstream transcription terminator, leading to a reduced expression of downstream genes. Functionally, also displays a weak uracil phosphoribosyltransferase activity which is not physiologically significant. The sequence is that of Bifunctional protein PyrR from Streptococcus agalactiae serotype Ia (strain ATCC 27591 / A909 / CDC SS700).